Here is a 354-residue protein sequence, read N- to C-terminus: Isopentenyl-diphosphate delta-isomerase (354 aa).

11–12 serves as a coordination point for substrate; it reads KK. Residues Ser67, 68 to 70, Ser98, and Asn126 each bind FMN; that span reads SMT. 98–100 contacts substrate; the sequence is SFK. Gln160 contributes to the substrate binding site. Glu161 lines the Mg(2+) pocket. Residues Lys192, Thr222, and 289 to 290 each bind FMN; that span reads AA.

This sequence belongs to the IPP isomerase type 2 family. Homooctamer. Dimer of tetramers. It depends on FMN as a cofactor. NADPH serves as cofactor. Mg(2+) is required as a cofactor.

It localises to the cytoplasm. The enzyme catalyses isopentenyl diphosphate = dimethylallyl diphosphate. Its function is as follows. Involved in the biosynthesis of isoprenoids. Catalyzes the 1,3-allylic rearrangement of the homoallylic substrate isopentenyl (IPP) to its allylic isomer, dimethylallyl diphosphate (DMAPP). The protein is Isopentenyl-diphosphate delta-isomerase of Borrelia garinii subsp. bavariensis (strain ATCC BAA-2496 / DSM 23469 / PBi) (Borreliella bavariensis).